Consider the following 600-residue polypeptide: uncharacterized protein (600 aa).

4Fe-4S ferredoxin-type domains are found at residues 14 to 44 and 53 to 82; these read RLAIIDYDRCQPKKCSMECMKYCPGVRMGEK and GKPVISEVLCSGCGICVKRCPFKAISIIGL. ABC transporter domains are found at residues 77-318 and 348-563; these read ISII…YLYG and LLSY…LKEM. ATP is bound by residues 117–124 and 380–387; these read GQNGIGKS and GPNGIGKT. Residues 569–594 are compositionally biased toward basic and acidic residues; that stretch reads RDPETGRPRANKEGSQRDIMQKEKGE. The interval 569–600 is disordered; the sequence is RDPETGRPRANKEGSQRDIMQKEKGEYYYVDE.

This sequence belongs to the ABC transporter superfamily.

This is an uncharacterized protein from Methanocaldococcus jannaschii (strain ATCC 43067 / DSM 2661 / JAL-1 / JCM 10045 / NBRC 100440) (Methanococcus jannaschii).